We begin with the raw amino-acid sequence, 420 residues long: Diaminopimelate decarboxylase (420 aa).

Lys54 carries the N6-(pyridoxal phosphate)lysine modification. His191 provides a ligand contact to substrate. Pyridoxal 5'-phosphate contacts are provided by residues Gly227 and 268-271 (EPGR). Arg271, Arg307, and Tyr311 together coordinate substrate. Cys342 serves as the catalytic Proton donor. Positions 343 and 378 each coordinate substrate. A pyridoxal 5'-phosphate-binding site is contributed by Tyr378.

This sequence belongs to the Orn/Lys/Arg decarboxylase class-II family. LysA subfamily. Pyridoxal 5'-phosphate is required as a cofactor.

The catalysed reaction is meso-2,6-diaminopimelate + H(+) = L-lysine + CO2. Its pathway is amino-acid biosynthesis; L-lysine biosynthesis via DAP pathway; L-lysine from DL-2,6-diaminopimelate: step 1/1. With respect to regulation, is activated by 2,3-dimercaptopropan-1-ol. Specifically catalyzes the decarboxylation of meso-diaminopimelate (meso-DAP) to L-lysine. Is not active against the DD- or LL-isomers of diaminopimelate. The chain is Diaminopimelate decarboxylase from Escherichia coli (strain K12).